The sequence spans 294 residues: Release factor glutamine methyltransferase (294 aa).

The S-adenosyl-L-methionine site is built by E148 and N201. Residue 201-204 (NPPY) participates in substrate binding.

It belongs to the protein N5-glutamine methyltransferase family. PrmC subfamily.

It carries out the reaction L-glutaminyl-[peptide chain release factor] + S-adenosyl-L-methionine = N(5)-methyl-L-glutaminyl-[peptide chain release factor] + S-adenosyl-L-homocysteine + H(+). Functionally, methylates the class 1 translation termination release factors RF1/PrfA and RF2/PrfB on the glutamine residue of the universally conserved GGQ motif. This is Release factor glutamine methyltransferase from Bifidobacterium longum (strain NCC 2705).